The sequence spans 549 residues: Probable protein kinase UbiB (549 aa).

Residues 123–501 (DFNETPLASA…QQQAHKSNYL (379 aa)) form the Protein kinase domain. ATP is bound by residues 129-137 (LASASISQV) and Lys-152. Residue Asp-287 is the Proton acceptor of the active site. The next 2 membrane-spanning stretches (helical) occupy residues 498–518 (SNYL…LFNQ) and 520–540 (ATLW…IIGW).

This sequence belongs to the ABC1 family. UbiB subfamily.

The protein resides in the cell inner membrane. Its pathway is cofactor biosynthesis; ubiquinone biosynthesis [regulation]. Functionally, is probably a protein kinase regulator of UbiI activity which is involved in aerobic coenzyme Q (ubiquinone) biosynthesis. The protein is Probable protein kinase UbiB of Shewanella sp. (strain MR-7).